Consider the following 400-residue polypeptide: Leucine-rich repeat flightless-interacting protein 2 (400 aa).

Disordered regions lie at residues 1-28 and 53-119; these read MGTP…SNID and LERQ…LSEV. Ser18 is modified (phosphoserine). A coiled-coil region spans residues 29–71; that stretch reads REAEARLAAKRAARAEARDIRMRELERQQKELDEKSDKQYAEN. Basic and acidic residues predominate over residues 53–68; sequence LERQQKELDEKSDKQY. The segment covering 73-102 has biased composition (polar residues); that stretch reads TRPSSRNSASATTPLSGNSSRRVSGDTSSL. Residues Ser77, Ser80, Ser88, Ser92, and Ser96 each carry the phosphoserine modification. Thr99 carries the phosphothreonine modification. A phosphoserine mark is found at Ser100 and Ser101. 2 coiled-coil regions span residues 106–202 and 245–393; these read DTSL…LIEK and LDVR…KANR.

This sequence belongs to the LRRFIP family. As to quaternary structure, interacts with DVL3 and FLII. Weakly interacts with MYD88 in resting cells. Following LPS-stimulation, the interaction with MYD88 is rapidly enhanced; the complex gradually dissociates to basal levels after 6 hours of stimulation. Interaction with MYD88 is regulated by LPS-induced phosphorylation. In the presence of LPS, competes with FLII for MYD88-binding.

Its function is as follows. May function as activator of the canonical Wnt signaling pathway, in association with DVL3, upstream of CTNNB1/beta-catenin. Positively regulates Toll-like receptor (TLR) signaling in response to agonist probably by competing with the negative FLII regulator for MYD88-binding. The polypeptide is Leucine-rich repeat flightless-interacting protein 2 (LRRFIP2) (Bos taurus (Bovine)).